A 420-amino-acid polypeptide reads, in one-letter code: Glutamyl-tRNA reductase (420 aa).

Substrate is bound by residues 49-52 (TCNR), S109, 114-116 (EPQ), and Q120. Catalysis depends on C50, which acts as the Nucleophile. 189–194 (GAGETI) contacts NADP(+).

This sequence belongs to the glutamyl-tRNA reductase family. In terms of assembly, homodimer.

It catalyses the reaction (S)-4-amino-5-oxopentanoate + tRNA(Glu) + NADP(+) = L-glutamyl-tRNA(Glu) + NADPH + H(+). It participates in porphyrin-containing compound metabolism; protoporphyrin-IX biosynthesis; 5-aminolevulinate from L-glutamyl-tRNA(Glu): step 1/2. In terms of biological role, catalyzes the NADPH-dependent reduction of glutamyl-tRNA(Glu) to glutamate 1-semialdehyde (GSA). In Yersinia enterocolitica serotype O:8 / biotype 1B (strain NCTC 13174 / 8081), this protein is Glutamyl-tRNA reductase.